We begin with the raw amino-acid sequence, 114 residues long: Kininogen-2 (114 aa).

The N-terminal stretch at 1–23 is a signal peptide; that stretch reads MRLWFCLSFFIVLCLEHFPGTLA. Residues 35–45 show a composition bias toward basic residues; sequence TRLHGHHKPSR. The interval 35 to 114 is disordered; sequence TRLHGHHKPS…QIPGLGPLRG (80 aa). Residues 65–80 are compositionally biased toward basic and acidic residues; the sequence is PESEEKTEQFLRDLPK. R113 carries the arginine amide modification.

The protein belongs to the bradykinin-related peptide family. As to expression, expressed by the skin glands.

Its subcellular location is the secreted. Its function is as follows. Potent vasodilator. Binds B1 (BDKRB1) and B2 (BDKRB2) bradykinin receptors. The sequence is that of Kininogen-2 from Bombina maxima (Giant fire-bellied toad).